The chain runs to 349 residues: Hydroxymethylglutaryl-CoA synthase (349 aa).

(3S)-3-hydroxy-3-methylglutaryl-CoA is bound by residues Asp-29 and Ala-30. The Proton donor/acceptor role is filled by Glu-81. (3S)-3-hydroxy-3-methylglutaryl-CoA-binding residues include Cys-113 and Thr-154. Residue Cys-113 is the Acyl-thioester intermediate of the active site. Arg-202 serves as a coordination point for CoA. Thr-204 and His-237 together coordinate (3S)-3-hydroxy-3-methylglutaryl-CoA. Residue His-237 is the Proton donor/acceptor of the active site. Residue Lys-242 coordinates CoA. Positions 246, 269, and 299 each coordinate (3S)-3-hydroxy-3-methylglutaryl-CoA.

This sequence belongs to the thiolase-like superfamily. Archaeal HMG-CoA synthase family. As to quaternary structure, interacts with acetoacetyl-CoA thiolase that catalyzes the precedent step in the pathway and with a DUF35 protein. The acetoacetyl-CoA thiolase/HMG-CoA synthase complex channels the intermediate via a fused CoA-binding site, which allows for efficient coupling of the endergonic thiolase reaction with the exergonic HMGCS reaction.

The catalysed reaction is acetoacetyl-CoA + acetyl-CoA + H2O = (3S)-3-hydroxy-3-methylglutaryl-CoA + CoA + H(+). It functions in the pathway metabolic intermediate biosynthesis; (R)-mevalonate biosynthesis; (R)-mevalonate from acetyl-CoA: step 2/3. Functionally, catalyzes the condensation of acetyl-CoA with acetoacetyl-CoA to form 3-hydroxy-3-methylglutaryl-CoA (HMG-CoA). Functions in the mevalonate (MVA) pathway leading to isopentenyl diphosphate (IPP), a key precursor for the biosynthesis of isoprenoid compounds that are building blocks of archaeal membrane lipids. This is Hydroxymethylglutaryl-CoA synthase from Methanosarcina acetivorans (strain ATCC 35395 / DSM 2834 / JCM 12185 / C2A).